A 353-amino-acid chain; its full sequence is GTPase Obg (353 aa).

The Obg domain maps to 1 to 159 (MKFLDEAKVY…RWIWLRLKLI (159 aa)). Residues 160 to 327 (ADAGLVGLPN…ALRALVAVIG (168 aa)) form the OBG-type G domain. GTP-binding positions include 166 to 173 (GLPNAGKS), 191 to 195 (FTTLH), 212 to 215 (DIPG), 279 to 282 (NKID), and 308 to 310 (SGV). Mg(2+)-binding residues include Ser-173 and Thr-193.

It belongs to the TRAFAC class OBG-HflX-like GTPase superfamily. OBG GTPase family. In terms of assembly, monomer. Requires Mg(2+) as cofactor.

It is found in the cytoplasm. An essential GTPase which binds GTP, GDP and possibly (p)ppGpp with moderate affinity, with high nucleotide exchange rates and a fairly low GTP hydrolysis rate. Plays a role in control of the cell cycle, stress response, ribosome biogenesis and in those bacteria that undergo differentiation, in morphogenesis control. The sequence is that of GTPase Obg from Rhodopseudomonas palustris (strain ATCC BAA-98 / CGA009).